A 338-amino-acid polypeptide reads, in one-letter code: UDP-3-O-acylglucosamine N-acyltransferase (338 aa).

The active-site Proton acceptor is H251.

It belongs to the transferase hexapeptide repeat family. LpxD subfamily. Homotrimer.

It carries out the reaction a UDP-3-O-[(3R)-3-hydroxyacyl]-alpha-D-glucosamine + a (3R)-hydroxyacyl-[ACP] = a UDP-2-N,3-O-bis[(3R)-3-hydroxyacyl]-alpha-D-glucosamine + holo-[ACP] + H(+). The protein operates within bacterial outer membrane biogenesis; LPS lipid A biosynthesis. In terms of biological role, catalyzes the N-acylation of UDP-3-O-acylglucosamine using 3-hydroxyacyl-ACP as the acyl donor. Is involved in the biosynthesis of lipid A, a phosphorylated glycolipid that anchors the lipopolysaccharide to the outer membrane of the cell. The chain is UDP-3-O-acylglucosamine N-acyltransferase from Psychrobacter arcticus (strain DSM 17307 / VKM B-2377 / 273-4).